The primary structure comprises 2188 residues: Phenolphthiocerol/phthiocerol polyketide synthase subunit C (2188 aa).

The region spanning Ser-34–Gln-462 is the Ketosynthase family 3 (KS3) domain. Residues Cys-210, His-345, and His-384 each act as for beta-ketoacyl synthase activity in the active site. The tract at residues Val-572–Pro-890 is acyltransferase. The For malonyltransferase activity role is filled by Ser-660. An N-terminal hotdog fold region spans residues His-928–Ala-1050. The interval His-928–Ile-1093 is dehydratase. In terms of domain architecture, PKS/mFAS DH spans His-928–Ala-1223. The active-site Proton acceptor; for dehydratase activity is His-959. Positions Glu-1067 to Ala-1223 are C-terminal hotdog fold. Catalysis depends on Asp-1129, which acts as the Proton donor; for dehydratase activity. Residues Gly-1467–Ile-1778 form an enoylreductase region. A beta-ketoacyl reductase region spans residues Gly-1802 to Val-1981. An NADP(+)-binding site is contributed by Gly-1803–Leu-1848. In terms of domain architecture, Carrier spans Glu-2069 to Met-2145. The residue at position 2105 (Ser-2105) is an O-(pantetheine 4'-phosphoryl)serine.

Homodimer. The cofactor is NADP(+). It depends on pantetheine 4'-phosphate as a cofactor.

It carries out the reaction icosanoyl-[(phenol)carboxyphthiodiolenone synthase] + 2 (S)-methylmalonyl-CoA + 3 malonyl-CoA + 5 NADPH + 10 H(+) = C32-carboxyphthiodiolenone-[(phenol)carboxyphthiodiolenone synthase] + 5 CO2 + 5 NADP(+) + 5 CoA + 2 H2O. The catalysed reaction is docosanoyl-[(phenol)carboxyphthiodiolenone synthase] + 2 (S)-methylmalonyl-CoA + 3 malonyl-CoA + 5 NADPH + 10 H(+) = C34-carboxyphthiodiolenone-[(phenol)carboxyphthiodiolenone synthase] + 5 CO2 + 5 NADP(+) + 5 CoA + 2 H2O. The enzyme catalyses 17-(4-hydroxyphenyl)heptadecanoyl-[(phenol)carboxyphthiodiolenone synthase] + 2 (S)-methylmalonyl-CoA + 3 malonyl-CoA + 5 NADPH + 10 H(+) = C35-(phenol)carboxyphthiodiolenone-[(phenol)carboxyphthiodiolenone synthase] + 5 CO2 + 5 NADP(+) + 5 CoA + 2 H2O. It catalyses the reaction 19-(4-hydroxyphenyl)nonadecanoyl-[(phenol)carboxyphthiodiolenone synthase] + 2 (S)-methylmalonyl-CoA + 3 malonyl-CoA + 5 NADPH + 10 H(+) = C37-(phenol)carboxyphthiodiolenone-[(phenol)carboxyphthiodiolenone synthase] + 5 CO2 + 5 NADP(+) + 5 CoA + 2 H2O. It participates in lipid metabolism; fatty acid biosynthesis. Part of the PpsABCDE complex involved in the biosynthesis of the lipid core common to phthiocerols and phenolphthiocerols by successive additions of malonyl-CoA or methylmalonyl-CoA extender units. PpsA can accept as substrate the activated forms of either icosanoyl (C20), docosanoyl (C22) or lignoceroyl (C24) groups from FadD26, or a (4-hydroxyphenyl)-C17 or (4-hydroxyphenyl)-C19 fatty acyl from FadD29. PpsA initiates the biosynthesis and extends its substrate using a malonyl-CoA extender unit. The PpsB and PpsC proteins add the second and third malonyl-CoA extender units. PpsD adds an (R)-methylmalonyl unit and PpsE adds a second (R)-methylmalonyl unit. The incorporation of the methylmalonyl units results in formation of two branched methyl groups in the elongated product. The chain is Phenolphthiocerol/phthiocerol polyketide synthase subunit C (ppsC) from Mycobacterium bovis (strain ATCC BAA-935 / AF2122/97).